The primary structure comprises 27 residues: Voltage-dependent anion-selective channel protein (27 aa).

It belongs to the eukaryotic mitochondrial porin family. Interacts with hexokinases. In terms of tissue distribution, photoreceptors.

The protein resides in the mitochondrion outer membrane. In terms of biological role, forms a channel through the cell membrane that allows diffusion of small hydrophilic molecules. This Doryteuthis pealeii (Longfin inshore squid) protein is Voltage-dependent anion-selective channel protein.